Here is a 256-residue protein sequence, read N- to C-terminus: Cysteine-rich repeat secretory protein 42 (256 aa).

The first 26 residues, 1–26 (MSSVFGSVHILAMIAIQLLLTHSVSS), serve as a signal peptide directing secretion. Gnk2-homologous domains are found at residues 33 to 136 (YLHH…SVAS) and 142 to 253 (YEND…LYPF).

It belongs to the cysteine-rich repeat secretory protein family.

The protein localises to the secreted. This chain is Cysteine-rich repeat secretory protein 42 (CRRSP42), found in Arabidopsis thaliana (Mouse-ear cress).